We begin with the raw amino-acid sequence, 343 residues long: Ribosomal RNA small subunit methyltransferase C (343 aa).

This sequence belongs to the methyltransferase superfamily. RsmC family. Monomer.

Its subcellular location is the cytoplasm. It carries out the reaction guanosine(1207) in 16S rRNA + S-adenosyl-L-methionine = N(2)-methylguanosine(1207) in 16S rRNA + S-adenosyl-L-homocysteine + H(+). Functionally, specifically methylates the guanine in position 1207 of 16S rRNA in the 30S particle. This is Ribosomal RNA small subunit methyltransferase C from Shigella flexneri serotype 5b (strain 8401).